The chain runs to 1430 residues: ABC transporter eupT (1430 aa).

Residues methionine 1–glutamine 26 are disordered. The ABC transporter 1 domain maps to leucine 112–alanine 368. An N-linked (GlcNAc...) asparagine glycan is attached at asparagine 292. 5 helical membrane passes run tryptophan 476–phenylalanine 496, valine 511–leucine 531, valine 557–phenylalanine 577, glycine 586–phenylalanine 606, and methionine 620–valine 640. A glycan (N-linked (GlcNAc...) asparagine) is linked at asparagine 684. A helical transmembrane segment spans residues valine 707–tyrosine 727. Residues phenylalanine 789–glycine 1032 form the ABC transporter 2 domain. Residue glycine 825–threonine 832 participates in ATP binding. A glycan (N-linked (GlcNAc...) asparagine) is linked at asparagine 1019. Helical transmembrane passes span isoleucine 1133–serine 1153, leucine 1213–phenylalanine 1233, leucine 1249–isoleucine 1269, glycine 1278–serine 1298, phenylalanine 1305–threonine 1325, and phenylalanine 1400–isoleucine 1420.

This sequence belongs to the ABC transporter superfamily. ABCG family. PDR (TC 3.A.1.205) subfamily.

It localises to the cell membrane. In terms of biological role, ABC transporter; part of the gene cluster that mediates the biosynthesis of eupenifeldin, a bistropolone meroterpenoid that acts as an antitumor agent. The polypeptide is ABC transporter eupT (Phoma sp).